Consider the following 77-residue polypeptide: Anionic peptide 17.1 (77 aa).

Positions 1–24 are cleaved as a signal peptide; the sequence is MASKTVLVLLLVSVLVSTFCTAKA.

This sequence belongs to the non-disulfide-bridged peptide (NDBP) superfamily. Long chain multifunctional peptide (group 2) family. Expressed by the venom gland.

Its subcellular location is the secreted. This Lychas mucronatus (Chinese swimming scorpion) protein is Anionic peptide 17.1.